The primary structure comprises 299 residues: Glycerol-3-phosphate dehydrogenase [NAD(P)+] (299 aa).

NADPH contacts are provided by tryptophan 11, arginine 30, histidine 31, and lysine 79. Sn-glycerol 3-phosphate-binding residues include lysine 79, glycine 107, and serine 109. Alanine 111 serves as a coordination point for NADPH. Residues lysine 161, aspartate 214, serine 224, arginine 225, and asparagine 226 each coordinate sn-glycerol 3-phosphate. Catalysis depends on lysine 161, which acts as the Proton acceptor. Arginine 225 contributes to the NADPH binding site. Residues valine 249 and glutamate 251 each contribute to the NADPH site.

This sequence belongs to the NAD-dependent glycerol-3-phosphate dehydrogenase family.

The protein localises to the cytoplasm. It catalyses the reaction sn-glycerol 3-phosphate + NAD(+) = dihydroxyacetone phosphate + NADH + H(+). The enzyme catalyses sn-glycerol 3-phosphate + NADP(+) = dihydroxyacetone phosphate + NADPH + H(+). It participates in membrane lipid metabolism; glycerophospholipid metabolism. In terms of biological role, catalyzes the reduction of the glycolytic intermediate dihydroxyacetone phosphate (DHAP) to sn-glycerol 3-phosphate (G3P), the key precursor for phospholipid synthesis. In Nitratiruptor sp. (strain SB155-2), this protein is Glycerol-3-phosphate dehydrogenase [NAD(P)+].